The following is a 360-amino-acid chain: UPF0324 membrane protein DVU_0123 (360 aa).

Helical transmembrane passes span 20 to 42 (VTES…FVAP), 57 to 79 (KDFI…PAVF), 100 to 122 (SYSL…VFLF), 142 to 164 (AACL…APAV), 171 to 193 (MAYS…PLIG), 203 to 225 (FGAF…FGFS), 232 to 254 (AGIY…AIMA), 278 to 297 (FPLF…AGVL), 310 to 327 (EWAF…TRLS), and 337 to 359 (FLFG…LLFM).

Belongs to the UPF0324 family.

It localises to the cell membrane. This Nitratidesulfovibrio vulgaris (strain ATCC 29579 / DSM 644 / CCUG 34227 / NCIMB 8303 / VKM B-1760 / Hildenborough) (Desulfovibrio vulgaris) protein is UPF0324 membrane protein DVU_0123.